We begin with the raw amino-acid sequence, 511 residues long: Centrosomal protein CCDC61 (511 aa).

The segment at 1-144 (MEVGTVVQEE…PLPLPYLGKP (144 aa)) is head domain. A coiled-coil region spans residues 147–272 (AELQKEIRAL…RVKSLTTELA (126 aa)). Disordered stretches follow at residues 306 to 403 (TRVG…SREP) and 447 to 486 (RGRK…SMDT). Residues 315 to 335 (GSRERIEDRGRRSEERVRRAD) show a composition bias toward basic and acidic residues. Polar residues predominate over residues 338–352 (GSRNCITRPSPSPTG). Positions 366 to 378 (DRQRRQKEAELKS) are enriched in basic and acidic residues.

The protein belongs to the CCDC61 family. Forms homodimers (via head domain).

The protein resides in the cytoplasm. Its subcellular location is the cytoskeleton. The protein localises to the microtubule organizing center. It is found in the centrosome. It localises to the centriolar satellite. The protein resides in the cilium basal body. In terms of biological role, microtubule-binding centrosomal protein required for centriole cohesion, independently of the centrosome-associated protein/CEP250 and rootletin/CROCC linker. In interphase, required for anchoring microtubule at the mother centriole subdistal appendages and for centrosome positioning. During mitosis, may be involved in spindle assembly and chromatin alignment by regulating the organization of spindle microtubules into a symmetrical structure. Plays a non-essential role in ciliogenesis. The protein is Centrosomal protein CCDC61 of Danio rerio (Zebrafish).